Here is a 135-residue protein sequence, read N- to C-terminus: Aspartate 1-decarboxylase (135 aa).

Catalysis depends on Ser25, which acts as the Schiff-base intermediate with substrate; via pyruvic acid. At Ser25 the chain carries Pyruvic acid (Ser). A substrate-binding site is contributed by Thr57. Tyr58 serves as the catalytic Proton donor. Residue 73-75 coordinates substrate; sequence GAA.

This sequence belongs to the PanD family. In terms of assembly, heterooctamer of four alpha and four beta subunits. Pyruvate serves as cofactor. Post-translationally, is synthesized initially as an inactive proenzyme, which is activated by self-cleavage at a specific serine bond to produce a beta-subunit with a hydroxyl group at its C-terminus and an alpha-subunit with a pyruvoyl group at its N-terminus.

It is found in the cytoplasm. It carries out the reaction L-aspartate + H(+) = beta-alanine + CO2. It functions in the pathway cofactor biosynthesis; (R)-pantothenate biosynthesis; beta-alanine from L-aspartate: step 1/1. Functionally, catalyzes the pyruvoyl-dependent decarboxylation of aspartate to produce beta-alanine. This chain is Aspartate 1-decarboxylase, found in Mycobacterium sp. (strain JLS).